The sequence spans 150 residues: UPF0098 protein TC_0109 (150 aa).

This sequence belongs to the UPF0098 family.

In Chlamydia muridarum (strain MoPn / Nigg), this protein is UPF0098 protein TC_0109.